A 472-amino-acid polypeptide reads, in one-letter code: 3-isopropylmalate dehydratase large subunit (472 aa).

Residues cysteine 347, cysteine 407, and cysteine 410 each contribute to the [4Fe-4S] cluster site.

It belongs to the aconitase/IPM isomerase family. LeuC type 1 subfamily. In terms of assembly, heterodimer of LeuC and LeuD. The cofactor is [4Fe-4S] cluster.

It catalyses the reaction (2R,3S)-3-isopropylmalate = (2S)-2-isopropylmalate. It participates in amino-acid biosynthesis; L-leucine biosynthesis; L-leucine from 3-methyl-2-oxobutanoate: step 2/4. Its function is as follows. Catalyzes the isomerization between 2-isopropylmalate and 3-isopropylmalate, via the formation of 2-isopropylmaleate. This is 3-isopropylmalate dehydratase large subunit from Bacillus velezensis (strain DSM 23117 / BGSC 10A6 / LMG 26770 / FZB42) (Bacillus amyloliquefaciens subsp. plantarum).